A 601-amino-acid polypeptide reads, in one-letter code: Glutathione-regulated potassium-efflux system protein KefB (601 aa).

13 consecutive transmembrane segments (helical) span residues 4 to 24 (SDFLLAGVLFLFAAVAAVPLA), 29 to 49 (IGAVLGYLLAGIAIGPWGLGF), 55 to 75 (EILHFSELGVVFLMFIIGLEL), 87 to 107 (IFGVGAAQVLLSAALLAGLLM), 115 to 135 (AAVVGGIGLAMSSTAMALQLM), 152 to 172 (VLLFQDLAVIPALALVPLLAG), 177 to 197 (HFDWMKIGMKVLAFVGMLIGG), 207 to 227 (FIAASGVREVFTAATLLLVLG), 230 to 250 (LFMDALGLSMALGTFIAGVLL), 268 to 288 (GLLLGLFFISVGMSLNLGVLY), 291 to 311 (LLWVVISVVVLVAVKILVLYL), 324 to 344 (MQFAGVLSQGGEFAFVLFSTA), and 356 to 376 (ALLLVTVTLSMMTTPLLMKLV). The RCK N-terminal domain occupies 400–519 (KPQVIVVGFG…AGVTQFSRET (120 aa)).

It belongs to the monovalent cation:proton antiporter 2 (CPA2) transporter (TC 2.A.37) family. KefB subfamily. As to quaternary structure, interacts with the regulatory subunit KefG.

It is found in the cell inner membrane. Functionally, pore-forming subunit of a potassium efflux system that confers protection against electrophiles. Catalyzes K(+)/H(+) antiport. This is Glutathione-regulated potassium-efflux system protein KefB from Escherichia coli O139:H28 (strain E24377A / ETEC).